The primary structure comprises 504 residues: Peptidyl-prolyl cis-trans isomerase-like 4 (504 aa).

Residues 1 to 169 (MSVMLETSLG…QNIRIRHVEI (169 aa)) form the PPIase cyclophilin-type domain. The RRM domain maps to 246–324 (NILFVCKLNP…RRIWVDFSQS (79 aa)). The span at 330–339 (RSMLSSSNPT) shows a compositional bias: polar residues. The interval 330–504 (RSMLSSSNPT…RERDDRDRRR (175 aa)) is disordered. Positions 340–354 (GRGGRGGRGGRGGNY) are enriched in gly residues. Basic and acidic residues-rich tracts occupy residues 356-381 (GRRD…DSRR) and 416-504 (SKRD…DRRR).

Belongs to the cyclophilin-type PPIase family. PPIL4 subfamily.

It is found in the nucleus. The enzyme catalyses [protein]-peptidylproline (omega=180) = [protein]-peptidylproline (omega=0). PPIases accelerate the folding of proteins. It catalyzes the cis-trans isomerization of proline imidic peptide bonds in oligopeptides. The sequence is that of Peptidyl-prolyl cis-trans isomerase-like 4 (CYP6) from Cryptococcus neoformans var. neoformans serotype D (strain B-3501A) (Filobasidiella neoformans).